The primary structure comprises 470 residues: Probable citrate synthase, mitochondrial (470 aa).

Catalysis depends on residues His297, His351, and Asp406.

Belongs to the citrate synthase family. In terms of assembly, homodimer.

It localises to the mitochondrion matrix. It carries out the reaction oxaloacetate + acetyl-CoA + H2O = citrate + CoA + H(+). It functions in the pathway carbohydrate metabolism; tricarboxylic acid cycle; isocitrate from oxaloacetate: step 1/2. The polypeptide is Probable citrate synthase, mitochondrial (Leishmania major).